Here is a 377-residue protein sequence, read N- to C-terminus: Heat stress transcription factor B-2b (377 aa).

A disordered region spans residues 1–56 (MPGEQTGETPTVAGVGGGGAGCSAGNSGGSSGCGAGGGGGGSGGGGGGGGDSQRSI). Residues 14 to 51 (GVGGGGAGCSAGNSGGSSGCGAGGGGGGSGGGGGGGGD) show a composition bias toward gly residues. Residues 57–151 (PTPFLTKTYQ…LLRDIQRRKI (95 aa)) mediate DNA binding. The tract at residues 220 to 265 (TTSCTTAPELVEENERLRKDNERLRKEMTKLKGLYANIYTLMANFT) is hydrophobic repeat HR-A/B. Residues 323–327 (KRARR) carry the Nuclear localization signal motif. The disordered stretch occupies residues 326–377 (RREEELGAAEEEDDDRREAAAQEGEQSSDVKAEPMEENNSGNHNGSWLELGK). The segment covering 331-340 (LGAAEEEDDD) has biased composition (acidic residues).

Belongs to the HSF family. Class B subfamily. Homotrimer. Exhibits temperature-dependent phosphorylation.

Its subcellular location is the nucleus. Transcriptional regulator that specifically binds DNA sequence 5'-AGAAnnTTCT-3' known as heat shock promoter elements (HSE). In Arabidopsis thaliana (Mouse-ear cress), this protein is Heat stress transcription factor B-2b (HSFB2B).